The chain runs to 513 residues: Histidine ammonia-lyase (513 aa).

Positions Ala-145–Gly-147 form a cross-link, 5-imidazolinone (Ala-Gly). Ser-146 bears the 2,3-didehydroalanine (Ser) mark.

The protein belongs to the PAL/histidase family. In terms of processing, contains an active site 4-methylidene-imidazol-5-one (MIO), which is formed autocatalytically by cyclization and dehydration of residues Ala-Ser-Gly.

The protein resides in the cytoplasm. It catalyses the reaction L-histidine = trans-urocanate + NH4(+). The protein operates within amino-acid degradation; L-histidine degradation into L-glutamate; N-formimidoyl-L-glutamate from L-histidine: step 1/3. The polypeptide is Histidine ammonia-lyase (Vibrio vulnificus (strain CMCP6)).